Here is a 67-residue protein sequence, read N- to C-terminus: DNA-directed RNA polymerase subunit omega (67 aa).

Belongs to the RNA polymerase subunit omega family. In terms of assembly, the RNAP catalytic core consists of 2 alpha, 1 beta, 1 beta' and 1 omega subunit. When a sigma factor is associated with the core the holoenzyme is formed, which can initiate transcription.

It catalyses the reaction RNA(n) + a ribonucleoside 5'-triphosphate = RNA(n+1) + diphosphate. Promotes RNA polymerase assembly. Latches the N- and C-terminal regions of the beta' subunit thereby facilitating its interaction with the beta and alpha subunits. The chain is DNA-directed RNA polymerase subunit omega from Acidovorax ebreus (strain TPSY) (Diaphorobacter sp. (strain TPSY)).